Here is a 34-residue protein sequence, read N- to C-terminus: Ribonuclease PL1 (34 aa).

The N-linked (GlcNAc...) asparagine; partial glycan is linked to N4. The active-site Proton acceptor is the H15.

Belongs to the pancreatic ribonuclease family.

It is found in the lysosome. It catalyses the reaction an [RNA] containing cytidine + H2O = an [RNA]-3'-cytidine-3'-phosphate + a 5'-hydroxy-ribonucleotide-3'-[RNA].. The catalysed reaction is an [RNA] containing uridine + H2O = an [RNA]-3'-uridine-3'-phosphate + a 5'-hydroxy-ribonucleotide-3'-[RNA].. This chain is Ribonuclease PL1, found in Sus scrofa (Pig).